Here is a 115-residue protein sequence, read N- to C-terminus: NADH-ubiquinone oxidoreductase chain 3 (115 aa).

Transmembrane regions (helical) follow at residues 4 to 24, 55 to 75, and 87 to 107; these read LMVM…AFWL, FFLV…LLPL, and MMLT…YEWM.

Belongs to the complex I subunit 3 family. As to quaternary structure, core subunit of respiratory chain NADH dehydrogenase (Complex I) which is composed of 45 different subunits. Interacts with TMEM186. Interacts with TMEM242.

It localises to the mitochondrion inner membrane. It carries out the reaction a ubiquinone + NADH + 5 H(+)(in) = a ubiquinol + NAD(+) + 4 H(+)(out). Its function is as follows. Core subunit of the mitochondrial membrane respiratory chain NADH dehydrogenase (Complex I) which catalyzes electron transfer from NADH through the respiratory chain, using ubiquinone as an electron acceptor. Essential for the catalytic activity of complex I. This is NADH-ubiquinone oxidoreductase chain 3 from Peromyscus mexicanus (Mexican deer mouse).